Here is a 275-residue protein sequence, read N- to C-terminus: NH(3)-dependent NAD(+) synthetase (275 aa).

ATP is bound at residue 50–57 (GISGGVDS). Position 56 (Asp-56) interacts with Mg(2+). Arg-147 is a binding site for deamido-NAD(+). Thr-167 is a binding site for ATP. Glu-172 is a binding site for Mg(2+). The deamido-NAD(+) site is built by Lys-180 and Asp-187. Residues Lys-196 and Thr-218 each contribute to the ATP site. 267–268 (HK) contributes to the deamido-NAD(+) binding site.

This sequence belongs to the NAD synthetase family. In terms of assembly, homodimer.

The enzyme catalyses deamido-NAD(+) + NH4(+) + ATP = AMP + diphosphate + NAD(+) + H(+). It participates in cofactor biosynthesis; NAD(+) biosynthesis; NAD(+) from deamido-NAD(+) (ammonia route): step 1/1. Catalyzes the ATP-dependent amidation of deamido-NAD to form NAD. Uses ammonia as a nitrogen source. The sequence is that of NH(3)-dependent NAD(+) synthetase from Pseudomonas putida (strain ATCC 47054 / DSM 6125 / CFBP 8728 / NCIMB 11950 / KT2440).